The following is a 146-amino-acid chain: Cyanate hydratase (146 aa).

Catalysis depends on residues Arg87, Glu90, and Ser113.

Belongs to the cyanase family.

It carries out the reaction cyanate + hydrogencarbonate + 3 H(+) = NH4(+) + 2 CO2. Catalyzes the reaction of cyanate with bicarbonate to produce ammonia and carbon dioxide. The sequence is that of Cyanate hydratase from Pseudomonas putida (strain ATCC 700007 / DSM 6899 / JCM 31910 / BCRC 17059 / LMG 24140 / F1).